Consider the following 121-residue polypeptide: Large ribosomal subunit protein bL19 (121 aa).

Belongs to the bacterial ribosomal protein bL19 family.

This protein is located at the 30S-50S ribosomal subunit interface and may play a role in the structure and function of the aminoacyl-tRNA binding site. The sequence is that of Large ribosomal subunit protein bL19 from Symbiobacterium thermophilum (strain DSM 24528 / JCM 14929 / IAM 14863 / T).